We begin with the raw amino-acid sequence, 634 residues long: Carbon monoxide dehydrogenase 2 (634 aa).

Residues Cys-44, Cys-53, Cys-56, Cys-61, and Cys-73 each contribute to the [4Fe-4S] cluster site. The [Ni-4Fe-5S] cluster site is built by His-264, Cys-343, Cys-453, Cys-484, and Cys-525.

Belongs to the Ni-containing carbon monoxide dehydrogenase family. In terms of assembly, homodimer. The cofactor is [4Fe-4S] cluster. It depends on [Ni-4Fe-5S] cluster as a cofactor.

It catalyses the reaction CO + 2 oxidized [2Fe-2S]-[ferredoxin] + H2O = 2 reduced [2Fe-2S]-[ferredoxin] + CO2 + 2 H(+). Functionally, CODH oxidizes carbon monoxide coupled, via CooF, to the reduction of a hydrogen cation by a hydrogenase (possibly CooH). This chain is Carbon monoxide dehydrogenase 2 (cooS2), found in Methanosarcina mazei (strain ATCC BAA-159 / DSM 3647 / Goe1 / Go1 / JCM 11833 / OCM 88) (Methanosarcina frisia).